We begin with the raw amino-acid sequence, 458 residues long: Cysteine protease ATG4C (458 aa).

Met-1 is subject to N-acetylmethionine. Cys-111 serves as the catalytic Nucleophile. Active-site residues include Asp-345 and His-347. Ser-451 is modified (phosphoserine). Thr-452 bears the Phosphothreonine mark.

Belongs to the peptidase C54 family.

It localises to the cytoplasm. The catalysed reaction is [protein]-C-terminal L-amino acid-glycyl-phosphatidylethanolamide + H2O = [protein]-C-terminal L-amino acid-glycine + a 1,2-diacyl-sn-glycero-3-phosphoethanolamine. Its activity is regulated as follows. Inhibited by N-ethylmaleimide. Cysteine protease that plays a key role in autophagy by mediating both proteolytic activation and delipidation of ATG8 family proteins. The protease activity is required for proteolytic activation of ATG8 family proteins: cleaves the C-terminal amino acid of ATG8 proteins MAP1LC3 and GABARAPL2, to reveal a C-terminal glycine. Exposure of the glycine at the C-terminus is essential for ATG8 proteins conjugation to phosphatidylethanolamine (PE) and insertion to membranes, which is necessary for autophagy. In addition to the protease activity, also mediates delipidation of ATG8 family proteins. Catalyzes delipidation of PE-conjugated forms of ATG8 proteins during macroautophagy. Compared to ATG4B, the major protein for proteolytic activation of ATG8 proteins, shows weaker ability to cleave the C-terminal amino acid of ATG8 proteins, while it displays stronger delipidation activity. In contrast to other members of the family, weakly or not involved in phagophore growth during mitophagy. This Homo sapiens (Human) protein is Cysteine protease ATG4C.